The following is a 500-amino-acid chain: Cobyric acid synthase (500 aa).

Residues 255–444 (AIDIAVIRCP…MHDLFHNDAF (190 aa)) form the GATase cobBQ-type domain. Cys337 acts as the Nucleophile in catalysis. His436 is an active-site residue.

It belongs to the CobB/CobQ family. CobQ subfamily.

Its pathway is cofactor biosynthesis; adenosylcobalamin biosynthesis. Catalyzes amidations at positions B, D, E, and G on adenosylcobyrinic A,C-diamide. NH(2) groups are provided by glutamine, and one molecule of ATP is hydrogenolyzed for each amidation. This is Cobyric acid synthase from Geobacillus thermodenitrificans (strain NG80-2).